The primary structure comprises 882 residues: Alanine--tRNA ligase (882 aa).

Residues histidine 570, histidine 574, cysteine 672, and histidine 676 each contribute to the Zn(2+) site.

The protein belongs to the class-II aminoacyl-tRNA synthetase family. It depends on Zn(2+) as a cofactor.

Its subcellular location is the cytoplasm. It carries out the reaction tRNA(Ala) + L-alanine + ATP = L-alanyl-tRNA(Ala) + AMP + diphosphate. Catalyzes the attachment of alanine to tRNA(Ala) in a two-step reaction: alanine is first activated by ATP to form Ala-AMP and then transferred to the acceptor end of tRNA(Ala). Also edits incorrectly charged Ser-tRNA(Ala) and Gly-tRNA(Ala) via its editing domain. The sequence is that of Alanine--tRNA ligase from Xanthomonas campestris pv. campestris (strain 8004).